Reading from the N-terminus, the 439-residue chain is Sorting nexin-31 (439 aa).

The 109-residue stretch at 1-109 folds into the PX domain; sequence MKMHFCIPVS…EFLTLVQLHT (109 aa). A disordered region spans residues 384-409; sequence TEQSPEMQIEVPEQGRSKKHPSQPSQ.

This sequence belongs to the sorting nexin family. Interacts with CCDC22, CCDC93, VPS26C and VPS35L, associates with the retriever and CCC complexes.

Its function is as follows. May be involved in protein trafficking. This is Sorting nexin-31 (Snx31) from Mus musculus (Mouse).